The primary structure comprises 332 residues: 2,3-diketo-L-gulonate reductase (332 aa).

His-44 functions as the Proton donor in the catalytic mechanism. NAD(+) is bound by residues 168 to 174 (ITMVDMS), 224 to 225 (WK), and 304 to 306 (GHE).

The protein belongs to the LDH2/MDH2 oxidoreductase family. DlgD subfamily. In terms of assembly, homodimer.

The protein resides in the cytoplasm. It catalyses the reaction 3-dehydro-L-gulonate + NAD(+) = 2,3-dioxo-L-gulonate + NADH + H(+). It carries out the reaction 3-dehydro-L-gulonate + NADP(+) = 2,3-dioxo-L-gulonate + NADPH + H(+). Its function is as follows. Catalyzes the reduction of 2,3-diketo-L-gulonate in the presence of NADH, to form 3-keto-L-gulonate. The polypeptide is 2,3-diketo-L-gulonate reductase (Klebsiella pneumoniae (strain 342)).